A 218-amino-acid chain; its full sequence is Guanylate kinase (218 aa).

The Guanylate kinase-like domain maps to 5 to 188 (GNLFILSAPS…ALLDLTTIVN (184 aa)). 12–19 (APSGAGKS) contacts ATP.

The protein belongs to the guanylate kinase family.

The protein resides in the cytoplasm. The catalysed reaction is GMP + ATP = GDP + ADP. Its function is as follows. Essential for recycling GMP and indirectly, cGMP. This chain is Guanylate kinase, found in Colwellia psychrerythraea (strain 34H / ATCC BAA-681) (Vibrio psychroerythus).